Reading from the N-terminus, the 77-residue chain is MCCINYYSIEYGCTVSGAYKKQTKLVSAWSLGSIIMRLTLIFWLLLLWCGFHLAALCIAIILFLLLLSAIDELNGWD.

This is an uncharacterized protein from Bos taurus (Bovine).